Reading from the N-terminus, the 117-residue chain is Large ribosomal subunit protein uL22c (117 aa).

It belongs to the universal ribosomal protein uL22 family. In terms of assembly, part of the 50S ribosomal subunit.

The protein resides in the plastid. Its subcellular location is the chloroplast. Functionally, this protein binds specifically to 23S rRNA. Its function is as follows. The globular domain of the protein is located near the polypeptide exit tunnel on the outside of the subunit, while an extended beta-hairpin is found that lines the wall of the exit tunnel in the center of the 70S ribosome. The sequence is that of Large ribosomal subunit protein uL22c (rpl22) from Pyropia yezoensis (Susabi-nori).